Here is a 152-residue protein sequence, read N- to C-terminus: Protein-export protein SecB (152 aa).

It belongs to the SecB family. As to quaternary structure, homotetramer, a dimer of dimers. One homotetramer interacts with 1 SecA dimer.

Its subcellular location is the cytoplasm. Functionally, one of the proteins required for the normal export of preproteins out of the cell cytoplasm. It is a molecular chaperone that binds to a subset of precursor proteins, maintaining them in a translocation-competent state. It also specifically binds to its receptor SecA. The polypeptide is Protein-export protein SecB (Rickettsia conorii (strain ATCC VR-613 / Malish 7)).